An 846-amino-acid polypeptide reads, in one-letter code: cGMP-dependent protein kinase (846 aa).

Residues 1–22 form an autoinhibitory segment region; sequence MRCNERNKKKAIFSNDDFSGED. CNMP-binding domain stretches follow at residues 51 to 166, 169 to 268, 288 to 391, and 411 to 510; these read VCST…FIDS, VFDM…IVLG, IFRQ…LGDN, and IFRY…LQII. 3',5'-cyclic GMP is bound by residues K106, G115, E116, A118, R125, and S126. 3',5'-cyclic GMP contacts are provided by R466, G475, E476, A478, R485, and T486. The Protein kinase domain maps to 534–791; the sequence is LETERIIGRG…FKDIKEHAFF (258 aa). ATP contacts are provided by residues 540 to 548 and K563; that span reads IGRGTFGTV. The active-site Proton acceptor is the D657. In terms of domain architecture, AGC-kinase C-terminal spans 792-846; the sequence is GNFNWDKLAGRLLEPPLVSKGETYAEDIDIKQIEEEDALNEGEPLDGDDSWDVDF. The tract at residues 824 to 846 is disordered; that stretch reads IEEEDALNEGEPLDGDDSWDVDF. Acidic residues predominate over residues 825-846; the sequence is EEEDALNEGEPLDGDDSWDVDF.

The protein belongs to the protein kinase superfamily. AGC Ser/Thr protein kinase family. cGMP subfamily. As to quaternary structure, monomer. The cofactor is Mg(2+). Autophosphorylated.

The protein resides in the cytoplasm. It localises to the endoplasmic reticulum membrane. It carries out the reaction L-seryl-[protein] + ATP = O-phospho-L-seryl-[protein] + ADP + H(+). It catalyses the reaction L-threonyl-[protein] + ATP = O-phospho-L-threonyl-[protein] + ADP + H(+). Activated by cGMP. Not activated by cAMP. cGMP binding allosterically triggers a conformational change at the alpha C-helix of cGMP-binding domain 4, which bridges the regulatory and catalytic domains, causing the capping triad, composed of Arg-477, Gln-525 and Asp-526, to form and stabilize the active conformation. The cGMP-binding domains acts cooperatively to activate PKG. Serine/threonine protein kinase which acts as a downstream effector of the second messenger cGMP. Controls the release of Ca(2+) from intracellular stores by regulating phosphoinositide biosynthesis. Ca(2+) signals are essential for merozoite and sporozoite invasion and egress from host hepatocytes and erythrocytes, and, in the mosquito vector, for gametocyte activation, and ookinete and sporozoite motility. During the host liver stage, regulates the initial invasion of host hepatocytes by sporozoites by regulating sporozoite motility and microneme exocytosis. Following parasite development in the hepatocytes, required for the release of merosomes, a vesicle containing the mature merozoites. During the asexual blood stage, required for the progression from schizont to the ring stage following merozoite invasion of host erythrocytes and for merozoite egress. Regulates merozoite egress by promoting the release of exonemes and micronemes which contain proteins essential for egress. Phosphorylates CDPK1 predominantly at the late schizont stage; phosphorylation at 'Ser-64' regulates CDPK1 protein-protein interaction and phosphorylation at 'Thr-231' may regulate CDPK1 kinase activity. In the mosquito vector, required for the initiation of gametogenesis induced by xanthurenic acid, specifically the gametocyte differentiation from the crescent-shaped form to the spherical form. Required for the gliding motility of ookinetes to reach and penetrate the midgut epithelium by promoting Ca(2+)-mediated activation of CDPK1 and CDPK4. Also required for microneme secretion in ookinete by promoting Ca(2+)-mediated activation of CDPK3. The sequence is that of cGMP-dependent protein kinase from Plasmodium vivax (strain Salvador I).